Consider the following 312-residue polypeptide: Olfactory receptor 10K2 (312 aa).

The Extracellular segment spans residues 1–25 (MERVNETVVREVIFLGFSSLARLQQ). N5 is a glycosylation site (N-linked (GlcNAc...) asparagine). The helical transmembrane segment at 26 to 46 (LLFVIFLLLYLFTLGTNAIII) threads the bilayer. Over 47–54 (STIVLDRA) the chain is Cytoplasmic. Residues 55 to 75 (LHIPMYFFLAILSCSEICYTF) form a helical membrane-spanning segment. Over 76–99 (IIVPKMLVDLLSQKKTISFLGCAI) the chain is Extracellular. Residues 100 to 120 (QMFSFLFLGCSHSFLLAVMGY) form a helical membrane-spanning segment. The Cytoplasmic segment spans residues 121-139 (DRYIAICNPLRYSVLMGHG). A helical transmembrane segment spans residues 140 to 160 (VCMGLVAAACACGFTVAQIIT). Residues 161-197 (SLVFHLPFYSSNQLHHFFCDIAPVLKLASHHNHFSQI) lie on the Extracellular side of the membrane. A helical transmembrane segment spans residues 198–217 (VIFMLCTLVLAIPLLLILVS). Over 218-237 (YVHILSAILQFPSTLGRCKA) the chain is Cytoplasmic. A helical membrane pass occupies residues 238 to 258 (FSTCVSHLIIVTVHYGCASFI). Topologically, residues 259–271 (YLRPQSNYSSSQD) are extracellular. The N-linked (GlcNAc...) asparagine glycan is linked to N265. A helical membrane pass occupies residues 272-292 (ALISVSYTIITPLFNPMIYSL). Residues 293–312 (RNKEFKSALCKIVRRTISLL) lie on the Cytoplasmic side of the membrane.

It belongs to the G-protein coupled receptor 1 family.

It is found in the cell membrane. Functionally, odorant receptor. The chain is Olfactory receptor 10K2 (OR10K2) from Homo sapiens (Human).